The following is a 421-amino-acid chain: Tyrosine--tRNA ligase (421 aa).

Tyrosine 35 lines the L-tyrosine pocket. Positions 40–49 (PTGPSLHAGH) match the 'HIGH' region motif. Residues tyrosine 169 and glutamine 173 each coordinate L-tyrosine. A 'KMSKS' region motif is present at residues 229–233 (KFGKS). Residue lysine 232 coordinates ATP. One can recognise an S4 RNA-binding domain in the interval 354–420 (RTIVDLLIAS…GKKNFAGVKI (67 aa)).

The protein belongs to the class-I aminoacyl-tRNA synthetase family. TyrS type 1 subfamily. As to quaternary structure, homodimer.

The protein localises to the cytoplasm. It carries out the reaction tRNA(Tyr) + L-tyrosine + ATP = L-tyrosyl-tRNA(Tyr) + AMP + diphosphate + H(+). Its function is as follows. Catalyzes the attachment of tyrosine to tRNA(Tyr) in a two-step reaction: tyrosine is first activated by ATP to form Tyr-AMP and then transferred to the acceptor end of tRNA(Tyr). The sequence is that of Tyrosine--tRNA ligase from Corynebacterium efficiens (strain DSM 44549 / YS-314 / AJ 12310 / JCM 11189 / NBRC 100395).